Consider the following 550-residue polypeptide: Hydroxylamine reductase (550 aa).

[2Fe-2S] cluster contacts are provided by C3, C6, C18, and C25. The hybrid [4Fe-2O-2S] cluster site is built by H249, E273, C317, C405, C433, C458, E492, and K494. C405 carries the post-translational modification Cysteine persulfide.

This sequence belongs to the HCP family. The cofactor is [2Fe-2S] cluster. Requires hybrid [4Fe-2O-2S] cluster as cofactor.

It is found in the cytoplasm. It carries out the reaction A + NH4(+) + H2O = hydroxylamine + AH2 + H(+). Its function is as follows. Catalyzes the reduction of hydroxylamine to form NH(3) and H(2)O. The sequence is that of Hydroxylamine reductase from Proteus mirabilis (strain HI4320).